The primary structure comprises 288 residues: Phenazine biosynthesis-like domain-containing protein 2 (288 aa).

Residue Glu46 is part of the active site.

This sequence belongs to the PhzF family.

The polypeptide is Phenazine biosynthesis-like domain-containing protein 2 (Pbld2) (Mus musculus (Mouse)).